Consider the following 136-residue polypeptide: Histone H3 (136 aa).

Residues 1-42 are disordered; sequence MARTKQTARKSTGGKAPRKQLATKAAAKSAPATGGVKKPHRY. N6-methylated lysine is present on lysine 5. N6-acetyllysine; alternate is present on lysine 10. The residue at position 10 (lysine 10) is an N6-methylated lysine; alternate. Serine 11 carries the phosphoserine modification. Lysine 15 and lysine 24 each carry N6-acetyllysine. Low complexity predominate over residues 22–33; sequence ATKAAAKSAPAT. An N6-methylated lysine mark is found at lysine 28, lysine 37, and lysine 80.

This sequence belongs to the histone H3 family. In terms of assembly, the nucleosome is a histone octamer containing two molecules each of H2A, H2B, H3 and H4 assembled in one H3-H4 heterotetramer and two H2A-H2B heterodimers. The octamer wraps approximately 147 bp of DNA. Post-translationally, acetylation is generally linked to gene activation. In terms of processing, methylation at Lys-5 is linked to gene activation. Methylation at Lys-10 is linked to gene repression.

It is found in the nucleus. The protein resides in the chromosome. In terms of biological role, core component of nucleosome. Nucleosomes wrap and compact DNA into chromatin, limiting DNA accessibility to the cellular machineries which require DNA as a template. Histones thereby play a central role in transcription regulation, DNA repair, DNA replication and chromosomal stability. DNA accessibility is regulated via a complex set of post-translational modifications of histones, also called histone code, and nucleosome remodeling. This chain is Histone H3, found in Acropora formosa (Staghorn coral).